The sequence spans 1785 residues: Plexin-2 (1785 aa).

Residues 1-17 (MLPESVFLLLISHFLRA) form the signal peptide. One can recognise a Sema domain in the interval 18 to 444 (VTQPPFETEG…MPYGIILEEL (427 aa)). Over 18-1139 (VTQPPFETEG…SDHALPSRLS (1122 aa)) the chain is Extracellular. Residue Asn66 is glycosylated (N-linked (GlcNAc...) asparagine). 9 disulfides stabilise this stretch: Cys84-Cys91, Cys118-Cys126, Cys247-Cys349, Cys263-Cys300, Cys318-Cys336, Cys447-Cys464, Cys453-Cys487, Cys456-Cys473, and Cys467-Cys479. Residue Asn249 is glycosylated (N-linked (GlcNAc...) asparagine). In terms of domain architecture, PSI 1 spans 446–488 (TCSHHSSCTECLVSVDPLCQWCHPTQSCTTSARCTSPVTSQCP). Residues Asn502, Asn536, and Asn572 are each glycosylated (N-linked (GlcNAc...) asparagine). Cys524 and Cys544 form a disulfide bridge. Residues 577-617 (DCSGYGTCSSCMSSEYNCAWCSGLHKCSNSCGALEKSKACV) form the PSI 2 domain. N-linked (GlcNAc...) asparagine glycosylation is found at Asn679 and Asn702. The region spanning 707–748 (SCTNLASDCSSCLALSPSLSCGWCNRQCSHECHESKATAVCD) is the PSI 3 domain. 3 IPT/TIG domains span residues 750 to 837 (PRID…LYSF), 840 to 924 (TSIF…PFEY), and 928 to 1040 (PSIS…LSPF). Asn864, Asn886, Asn984, and Asn1016 each carry an N-linked (GlcNAc...) asparagine glycan. Residues 1140 to 1160 (LLILGLLLFIVVTLTVMCLVF) traverse the membrane as a helical segment. The stretch at 1159 to 1197 (VFKRRRQEREKEYRKIQLQMENLENNVRKECKQAFAELQ) forms a coiled coil. Residues 1161–1785 (KRRRQEREKE…HIYSTISDYE (625 aa)) are Cytoplasmic-facing.

The protein belongs to the plexin family. In terms of assembly, interacts with mab-20. Expressed predominantly in the central nervous system from embryonic to adult stages. Expressed in early embryos in ventral neuroblasts. Expressed in neurons and in a subset of posterior lateral and ventral epidermal cells following epidermal enclosure. Present in neurons, muscles and weakly expressed in epidermal cells of the larval tail.

It is found in the cell membrane. In terms of biological role, involved as a receptor for mab-20/sema-2a in the formation or stabilization of cell-cell contacts at several stages of epithelial morphogenesis. In early embryonic development, required for proper ventral closure of the epidermis. During male tail morphogenesis, involved in precursor cell sorting and in the formation of distinct sensory rays. Involved in axon guidance of SDQL neurons during neurogenesis. Probably in response to stimulation by mab-20, regulates fln-1-mediated remodeling of the actin cytoskeleton and thus axon guidance and/or fasciculation of DD/VD neurons. This Caenorhabditis elegans protein is Plexin-2.